Here is an 828-residue protein sequence, read N- to C-terminus: Outer membrane usher protein MrkC (828 aa).

The N-terminal stretch at 1 to 18 (MKQRSICPGRLSTAIAVA) is a signal peptide. C813 and C827 are disulfide-bonded.

Belongs to the fimbrial export usher family.

The protein resides in the cell outer membrane. In terms of biological role, involved in the export and assembly of the type 3 fimbrial subunit (MrkA). The chain is Outer membrane usher protein MrkC (mrkC) from Klebsiella pneumoniae.